The chain runs to 334 residues: Phosphoribosylformylglycinamidine cyclo-ligase (334 aa).

Belongs to the AIR synthase family.

The protein localises to the cytoplasm. It catalyses the reaction 2-formamido-N(1)-(5-O-phospho-beta-D-ribosyl)acetamidine + ATP = 5-amino-1-(5-phospho-beta-D-ribosyl)imidazole + ADP + phosphate + H(+). The protein operates within purine metabolism; IMP biosynthesis via de novo pathway; 5-amino-1-(5-phospho-D-ribosyl)imidazole from N(2)-formyl-N(1)-(5-phospho-D-ribosyl)glycinamide: step 2/2. The chain is Phosphoribosylformylglycinamidine cyclo-ligase from Thermococcus kodakarensis (strain ATCC BAA-918 / JCM 12380 / KOD1) (Pyrococcus kodakaraensis (strain KOD1)).